Reading from the N-terminus, the 145-residue chain is Large ribosomal subunit protein uL11 (145 aa).

This sequence belongs to the universal ribosomal protein uL11 family. As to quaternary structure, part of the ribosomal stalk of the 50S ribosomal subunit. Interacts with L10 and the large rRNA to form the base of the stalk. L10 forms an elongated spine to which L12 dimers bind in a sequential fashion forming a multimeric L10(L12)X complex. Post-translationally, one or more lysine residues are methylated.

Forms part of the ribosomal stalk which helps the ribosome interact with GTP-bound translation factors. This chain is Large ribosomal subunit protein uL11, found in Hydrogenobaculum sp. (strain Y04AAS1).